A 295-amino-acid chain; its full sequence is ATP synthase gamma chain (295 aa).

This sequence belongs to the ATPase gamma chain family. F-type ATPases have 2 components, CF(1) - the catalytic core - and CF(0) - the membrane proton channel. CF(1) has five subunits: alpha(3), beta(3), gamma(1), delta(1), epsilon(1). CF(0) has three main subunits: a, b and c.

The protein resides in the cell membrane. In terms of biological role, produces ATP from ADP in the presence of a proton gradient across the membrane. The gamma chain is believed to be important in regulating ATPase activity and the flow of protons through the CF(0) complex. The protein is ATP synthase gamma chain of Caldanaerobacter subterraneus subsp. tengcongensis (strain DSM 15242 / JCM 11007 / NBRC 100824 / MB4) (Thermoanaerobacter tengcongensis).